A 191-amino-acid chain; its full sequence is Aminodeoxychorismate synthase component 2 (191 aa).

The Glutamine amidotransferase type-1 domain maps to 1 to 191; that stretch reads MLLLIDNYDS…HQLLDNFLNR (191 aa). Residues Cys79, His172, and Glu174 contribute to the active site.

Monomer. Heterodimer consisting of two non-identical subunits: a glutamine amidotransferase subunit (PabA) and a aminodeoxychorismate synthase subunit (PabB).

The catalysed reaction is chorismate + L-glutamine = 4-amino-4-deoxychorismate + L-glutamate. The protein operates within cofactor biosynthesis; tetrahydrofolate biosynthesis; 4-aminobenzoate from chorismate: step 1/2. Functionally, part of a heterodimeric complex that catalyzes the two-step biosynthesis of 4-amino-4-deoxychorismate (ADC), a precursor of p-aminobenzoate (PABA) and tetrahydrofolate. In the first step, a glutamine amidotransferase (PabA) generates ammonia as a substrate that, along with chorismate, is used in the second step, catalyzed by aminodeoxychorismate synthase (PabB) to produce ADC. PabA converts glutamine into glutamate only in the presence of stoichiometric amounts of PabB. The sequence is that of Aminodeoxychorismate synthase component 2 (pabA) from Serratia marcescens.